The chain runs to 184 residues: UPF0301 protein SPO0296 (184 aa).

The protein belongs to the UPF0301 (AlgH) family.

The polypeptide is UPF0301 protein SPO0296 (Ruegeria pomeroyi (strain ATCC 700808 / DSM 15171 / DSS-3) (Silicibacter pomeroyi)).